The primary structure comprises 148 residues: Small ribosomal subunit protein uS13 (148 aa).

The protein belongs to the universal ribosomal protein uS13 family. As to quaternary structure, part of the 30S ribosomal subunit. Forms a loose heterodimer with protein S19. Forms two bridges to the 50S subunit in the 70S ribosome.

Its function is as follows. Located at the top of the head of the 30S subunit, it contacts several helices of the 16S rRNA. In the 70S ribosome it contacts the 23S rRNA (bridge B1a) and protein L5 of the 50S subunit (bridge B1b), connecting the 2 subunits; these bridges are implicated in subunit movement. The protein is Small ribosomal subunit protein uS13 of Pyrococcus abyssi (strain GE5 / Orsay).